Here is a 435-residue protein sequence, read N- to C-terminus: UDP-N-acetylmuramate--L-alanine ligase (435 aa).

An ATP-binding site is contributed by 108–114; the sequence is GSHGKTS.

The protein belongs to the MurCDEF family.

It localises to the cytoplasm. The enzyme catalyses UDP-N-acetyl-alpha-D-muramate + L-alanine + ATP = UDP-N-acetyl-alpha-D-muramoyl-L-alanine + ADP + phosphate + H(+). It participates in cell wall biogenesis; peptidoglycan biosynthesis. Functionally, cell wall formation. This chain is UDP-N-acetylmuramate--L-alanine ligase, found in Exiguobacterium sp. (strain ATCC BAA-1283 / AT1b).